Reading from the N-terminus, the 91-residue chain is Potassium channel toxin TdiKIK (91 aa).

The signal sequence occupies residues 1 to 25; sequence MVATNRCCVFALLVALLLIHSLAEA. Positions 26-44 are excised as a propeptide; it reads GKGKEVLGKIKNKLVEVKE. Residues 58-91 enclose the BetaSPN-type CS-alpha/beta domain; it reads EYACPVIDKFCEDHCAAKNAIGKCDDFKCQCLNS. 3 disulfides stabilise this stretch: Cys61–Cys81, Cys68–Cys86, and Cys72–Cys88.

As to expression, expressed by the venom gland.

It is found in the secreted. Its function is as follows. The full peptide presents antibacterial and cytotoxic activities. The synthetic C-terminus (AA 33-76) inhibits voltage-gated potassium channels Kv1.1/KCNA1, Kv1.2/KCNA2, and Kv1.3/KCNA3. This chain is Potassium channel toxin TdiKIK, found in Tityus discrepans (Venezuelan scorpion).